Reading from the N-terminus, the 214-residue chain is Holliday junction branch migration complex subunit RuvA (214 aa).

The domain I stretch occupies residues 1 to 63 (MISFLRGPVA…EDSMTLYGFA (63 aa)). The domain II stretch occupies residues 64–139 (DPDEREVFEI…KLVPHGTVNG (76 aa)). The segment at 139-143 (GAPAS) is flexible linker. The segment at 144–214 (PSAQWKPQVV…SAGRQVTARG (71 aa)) is domain III.

The protein belongs to the RuvA family. Homotetramer. Forms an RuvA(8)-RuvB(12)-Holliday junction (HJ) complex. HJ DNA is sandwiched between 2 RuvA tetramers; dsDNA enters through RuvA and exits via RuvB. An RuvB hexamer assembles on each DNA strand where it exits the tetramer. Each RuvB hexamer is contacted by two RuvA subunits (via domain III) on 2 adjacent RuvB subunits; this complex drives branch migration. In the full resolvosome a probable DNA-RuvA(4)-RuvB(12)-RuvC(2) complex forms which resolves the HJ.

The protein resides in the cytoplasm. The RuvA-RuvB-RuvC complex processes Holliday junction (HJ) DNA during genetic recombination and DNA repair, while the RuvA-RuvB complex plays an important role in the rescue of blocked DNA replication forks via replication fork reversal (RFR). RuvA specifically binds to HJ cruciform DNA, conferring on it an open structure. The RuvB hexamer acts as an ATP-dependent pump, pulling dsDNA into and through the RuvAB complex. HJ branch migration allows RuvC to scan DNA until it finds its consensus sequence, where it cleaves and resolves the cruciform DNA. The protein is Holliday junction branch migration complex subunit RuvA of Renibacterium salmoninarum (strain ATCC 33209 / DSM 20767 / JCM 11484 / NBRC 15589 / NCIMB 2235).